A 461-amino-acid polypeptide reads, in one-letter code: Chromosomal replication initiator protein DnaA (461 aa).

The segment at 1–83 (MDHSPWQRCL…LRFDVGSKPT (83 aa)) is domain I, interacts with DnaA modulators. Residues 83-124 (TIDNSVTNSPVSRNTGGNESLFAKATSAPKVAEPESNIPKKT) form a domain II region. Residues 125–341 (NVRLNYTFEN…GALNRVIANA (217 aa)) are domain III, AAA+ region. Residues Gly169, Gly171, Lys172, and Thr173 each contribute to the ATP site. The tract at residues 342–461 (NFTGRAITID…YSNLIRTLSS (120 aa)) is domain IV, binds dsDNA.

The protein belongs to the DnaA family. Oligomerizes as a right-handed, spiral filament on DNA at oriC.

The protein localises to the cytoplasm. In terms of biological role, plays an essential role in the initiation and regulation of chromosomal replication. ATP-DnaA binds to the origin of replication (oriC) to initiate formation of the DNA replication initiation complex once per cell cycle. Binds the DnaA box (a 9 base pair repeat at the origin) and separates the double-stranded (ds)DNA. Forms a right-handed helical filament on oriC DNA; dsDNA binds to the exterior of the filament while single-stranded (ss)DNA is stabiized in the filament's interior. The ATP-DnaA-oriC complex binds and stabilizes one strand of the AT-rich DNA unwinding element (DUE), permitting loading of DNA polymerase. After initiation quickly degrades to an ADP-DnaA complex that is not apt for DNA replication. Binds acidic phospholipids. This Colwellia psychrerythraea (strain 34H / ATCC BAA-681) (Vibrio psychroerythus) protein is Chromosomal replication initiator protein DnaA.